Consider the following 256-residue polypeptide: Phosphonates import ATP-binding protein PhnC (256 aa).

Residues 3–247 (LELKNISKTY…VLHKEIFTNV (245 aa)) enclose the ABC transporter domain. 36–43 (GLSGAGKS) contributes to the ATP binding site.

Belongs to the ABC transporter superfamily. Phosphonates importer (TC 3.A.1.9.1) family. As to quaternary structure, the complex is composed of two ATP-binding proteins (PhnC), two transmembrane proteins (PhnE) and a solute-binding protein (PhnD).

It is found in the cell inner membrane. The catalysed reaction is phosphonate(out) + ATP + H2O = phosphonate(in) + ADP + phosphate + H(+). In terms of biological role, part of the ABC transporter complex PhnCDE involved in phosphonates import. Responsible for energy coupling to the transport system. In Treponema denticola (strain ATCC 35405 / DSM 14222 / CIP 103919 / JCM 8153 / KCTC 15104), this protein is Phosphonates import ATP-binding protein PhnC.